The following is an 804-amino-acid chain: Protein-lysine N-methyltransferase SMYD4 (804 aa).

112–114 (RSA) is an S-adenosyl-L-methionine binding site. The region spanning 233–574 (SSIGLCVDPL…KGQEILHCYG (342 aa)) is the SET domain. Zn(2+) is bound by residues C296, C299, C309, C312, C318, C322, H331, and C335. The segment at 296–335 (CHRCLKHTLATVPCDGCSYAKYCSQECLQQAWELYHRTEC) adopts an MYND-type zinc-finger fold. S-adenosyl-L-methionine is bound by residues N427, 539 to 540 (NH), Y573, and F595.

The protein belongs to the class V-like SAM-binding methyltransferase superfamily. Interacts (via MYND-type zinc finger) with HDAC1.

It localises to the nucleus. It is found in the cytoplasm. The enzyme catalyses L-lysyl-[protein] + S-adenosyl-L-methionine = N(6)-methyl-L-lysyl-[protein] + S-adenosyl-L-homocysteine + H(+). In terms of biological role, protein-lysine N-methyltransferase. Monomethylates PRMT5, modulating its transcriptional activity. May also act as a histone methyltransferase. Plays a critical role in cardiac development. Acts as a key epigenetic regulator of gene expression during cardiac development via its dual activities as a methyltransferase and negative regulator of HDAC1. The polypeptide is Protein-lysine N-methyltransferase SMYD4 (Homo sapiens (Human)).